The following is a 170-amino-acid chain: CASP-like protein 1F1 (170 aa).

The Cytoplasmic portion of the chain corresponds to 1-16 (MMGDNEGRRTPLLNLG). Residues 17–37 (VQVSMRVLIIGAAMASMWVMI) traverse the membrane as a helical segment. At 38–62 (TNREVASVYGIAFEAKYSYSSAFRY) the chain is on the extracellular side. A helical transmembrane segment spans residues 63–83 (LVYAQIAVCAATLFTLVWACL). The Cytoplasmic segment spans residues 84-88 (AVRRR). A helical transmembrane segment spans residues 89–109 (GLVFALFFFDLLTTLTAISAF). Residues 110 to 141 (SAAFAEGYVGKYGNKQAGWLPICGYVHVYCSR) are Extracellular-facing. A helical transmembrane segment spans residues 142–162 (VTISLAMSFASFVLLFILTVL). The Cytoplasmic portion of the chain corresponds to 163–170 (TASSARHY).

Belongs to the Casparian strip membrane proteins (CASP) family. As to quaternary structure, homodimer and heterodimers.

The protein resides in the cell membrane. The sequence is that of CASP-like protein 1F1 from Arabidopsis lyrata subsp. lyrata (Lyre-leaved rock-cress).